The sequence spans 451 residues: Serine--tRNA ligase (451 aa).

258–260 (TSE) contributes to the L-serine binding site. 289 to 291 (RSE) serves as a coordination point for ATP. E312 contributes to the L-serine binding site. 376 to 379 (EISS) serves as a coordination point for ATP. S411 serves as a coordination point for L-serine.

It belongs to the class-II aminoacyl-tRNA synthetase family. Type-1 seryl-tRNA synthetase subfamily. Homodimer. The tRNA molecule binds across the dimer.

The protein localises to the cytoplasm. The enzyme catalyses tRNA(Ser) + L-serine + ATP = L-seryl-tRNA(Ser) + AMP + diphosphate + H(+). The catalysed reaction is tRNA(Sec) + L-serine + ATP = L-seryl-tRNA(Sec) + AMP + diphosphate + H(+). The protein operates within aminoacyl-tRNA biosynthesis; selenocysteinyl-tRNA(Sec) biosynthesis; L-seryl-tRNA(Sec) from L-serine and tRNA(Sec): step 1/1. Catalyzes the attachment of serine to tRNA(Ser). Is also able to aminoacylate tRNA(Sec) with serine, to form the misacylated tRNA L-seryl-tRNA(Sec), which will be further converted into selenocysteinyl-tRNA(Sec). This Bordetella pertussis (strain Tohama I / ATCC BAA-589 / NCTC 13251) protein is Serine--tRNA ligase.